The primary structure comprises 150 residues: uncharacterized protein (150 aa).

In terms of domain architecture, N-acetyltransferase spans 4–149 (IQIRNYQPGD…TNFYMRYKPQ (146 aa)).

Belongs to the acetyltransferase family.

This is an uncharacterized protein from Escherichia coli (strain K12).